The chain runs to 1018 residues: Fibronectin-binding protein A (1018 aa).

Positions 1–36 are cleaved as a signal peptide; it reads MKNNLRYGIRKHKLGAASVFLGTMIVVGMGQDKEAA. The YSIRK-G/S signaling motif signature appears at 7–18; it reads YGIRKHKLGAAS. The interval 37 to 511 is ligand-binding A region; it reads ASEQKTTTVE…SNKANGNEKN (475 aa). Disordered stretches follow at residues 38–61 and 78–195; these read SEQK…SETQ and ATVT…ETGT. Composition is skewed to polar residues over residues 39 to 61 and 78 to 92; these read EQKT…SETQ and ATVT…QVTT. Residues 112–126 show a composition bias toward basic and acidic residues; the sequence is TVKEEVVKEEAKPQV. Residues 129-139 are compositionally biased toward polar residues; sequence TTQSQDNSGDQ. A fibrinogen/elastin/tropoelastin-binding region spans residues 194-511; sequence GTDVTSKVTV…SNKANGNEKN (318 aa). The tract at residues 512 to 872 is fibronectin-binding; it reads GPIIQNNKFE…EGQQTIEEDT (361 aa). The stretch at 545–574 is one B-1 repeat; sequence EEYDSSTLDIDYHTAIDGGGGYVDGYIETI. The segment at 545–604 is 2 X approximate tandem repeats; it reads EEYDSSTLDIDYHTAIDGGGGYVDGYIETIEETDSSAIDIDYHTAVDSEAGHVGGYTESS. The stretch at 575–604 is one B-2 repeat; the sequence is EETDSSAIDIDYHTAVDSEAGHVGGYTESS. Disordered regions lie at residues 595–622, 740–813, and 827–997; these read GHVG…NSKH, LGYE…DIDF, and EIIE…GMLF. A D-1 repeat occupies 745 to 782; the sequence is GQNSGNQSFEEDTEEDKPKYEQGGNIVDIDFDSVPQIH. Residues 745–878 form a 4 X approximate tandem repeats, D-3 repeat has more fibronectin-binding activity region; sequence GQNSGNQSFE…EEDTTPPIVP (134 aa). A D-2 repeat occupies 783–820; the sequence is GQNKGNQSFEEDTEKDKPKYEHGGNIIDIDFDSVPHIH. The D-3 repeat unit spans residues 821–859; the sequence is GFNKHTEIIEEDTNKDKPSYQFGGHNSVDFEEDTLPKVS. Residues 827–838 are compositionally biased toward basic and acidic residues; it reads EIIEEDTNKDKP. The stretch at 860-878 is one D-4; truncated repeat; that stretch reads GQNEGQQTIEEDTTPPIVP. A compositionally biased stretch (pro residues) spans 875–938; sequence PIVPPTPPTP…PAEPGKPVPP (64 aa). 5 WR repeats span residues 879–892, 893–906, 907–920, 921–934, and 935–948; these read PTPP…EPET, PTPP…EPGK, and PVPP…KPSK. The interval 879–948 is 5 X tandem repeats, Pro-rich (WR); it reads PTPPTPEVPS…AKEEPKKPSK (70 aa). Residues 982–986 carry the LPXTG sorting signal motif; that stretch reads LPETG. Pentaglycyl murein peptidoglycan amidated threonine is present on Thr-985. The propeptide at 986-1018 is removed by sortase; sequence GGEESTNKGMLFGGLFSILGLALLRRNKKNHKA.

Its subcellular location is the secreted. It localises to the cell wall. In terms of biological role, possesses multiple, substituting fibronectin (Fn) binding regions, each capable of conferring adherence to both soluble and immobilized forms of Fn. This confers to S.aureus the ability to invade endothelial cells both in vivo and in vitro, without requiring additional factors, although in a slow and inefficient way through actin rearrangements in host cells. This invasion process is mediated by integrin alpha-5/beta-1. Promotes bacterial attachment to both soluble and immobilized forms of fibrinogen (Fg) by means of a unique binding site localized within the 17 C-terminal residues of the gamma-chain of human Fg. Both plasma proteins (Fn and Fg) function as a bridge between bacterium and host cell. Promotes attachment to immobilized elastin peptides in a dose-dependent and saturable manner. Promotes attachment to both full-length and segments of immobilized human tropoelastin at multiple sites in a dose and pH-dependent manner. Promotes adherence to and aggregation of activated platelets independently of other S.aureus surface molecules. Is a critical mediator implicated in the induction of experimental endocarditis in rats with catheter-induced aortic vegetations, promoting both colonization and persistence of the bacterium into the host. This is Fibronectin-binding protein A (fnbA) from Staphylococcus aureus (strain NCTC 8325 / PS 47).